The sequence spans 185 residues: NAD(P)H-quinone oxidoreductase subunit J (185 aa).

Belongs to the complex I 30 kDa subunit family. As to quaternary structure, NDH-1 can be composed of about 15 different subunits; different subcomplexes with different compositions have been identified which probably have different functions.

The protein localises to the cellular thylakoid membrane. It carries out the reaction a plastoquinone + NADH + (n+1) H(+)(in) = a plastoquinol + NAD(+) + n H(+)(out). The enzyme catalyses a plastoquinone + NADPH + (n+1) H(+)(in) = a plastoquinol + NADP(+) + n H(+)(out). In terms of biological role, NDH-1 shuttles electrons from an unknown electron donor, via FMN and iron-sulfur (Fe-S) centers, to quinones in the respiratory and/or the photosynthetic chain. The immediate electron acceptor for the enzyme in this species is believed to be plastoquinone. Couples the redox reaction to proton translocation, and thus conserves the redox energy in a proton gradient. Cyanobacterial NDH-1 also plays a role in inorganic carbon-concentration. The protein is NAD(P)H-quinone oxidoreductase subunit J of Prochlorococcus marinus (strain MIT 9303).